A 221-amino-acid chain; its full sequence is 7-cyano-7-deazaguanine synthase (221 aa).

8 to 18 (MSGGMDSTLCA) contributes to the ATP binding site. 4 residues coordinate Zn(2+): cysteine 187, cysteine 195, cysteine 198, and cysteine 201.

The protein belongs to the QueC family. Zn(2+) serves as cofactor.

The enzyme catalyses 7-carboxy-7-deazaguanine + NH4(+) + ATP = 7-cyano-7-deazaguanine + ADP + phosphate + H2O + H(+). It participates in purine metabolism; 7-cyano-7-deazaguanine biosynthesis. In terms of biological role, catalyzes the ATP-dependent conversion of 7-carboxy-7-deazaguanine (CDG) to 7-cyano-7-deazaguanine (preQ(0)). The sequence is that of 7-cyano-7-deazaguanine synthase from Campylobacter concisus (strain 13826).